Here is a 323-residue protein sequence, read N- to C-terminus: Methionyl-tRNA formyltransferase (323 aa).

(6S)-5,6,7,8-tetrahydrofolate is bound at residue 117-120 (SLLP).

This sequence belongs to the Fmt family.

The catalysed reaction is L-methionyl-tRNA(fMet) + (6R)-10-formyltetrahydrofolate = N-formyl-L-methionyl-tRNA(fMet) + (6S)-5,6,7,8-tetrahydrofolate + H(+). Functionally, attaches a formyl group to the free amino group of methionyl-tRNA(fMet). The formyl group appears to play a dual role in the initiator identity of N-formylmethionyl-tRNA by promoting its recognition by IF2 and preventing the misappropriation of this tRNA by the elongation apparatus. The chain is Methionyl-tRNA formyltransferase from Albidiferax ferrireducens (strain ATCC BAA-621 / DSM 15236 / T118) (Rhodoferax ferrireducens).